A 1888-amino-acid polypeptide reads, in one-letter code: Protein mms22 (1888 aa).

3 disordered regions span residues 12 to 34, 151 to 258, and 316 to 354; these read DSQD…RGNE, FSSD…ISSN, and RRKL…SRFD. Composition is skewed to polar residues over residues 13–32, 212–227, and 338–348; these read SQDS…SQRG, SNLN…SSTI, and SDNSISTPTPT.

It belongs to the MMS22 family.

The protein localises to the nucleus. In terms of biological role, involved in protection against replication-dependent DNA damage. May act by restoring active replication forks, repairing unusual DNA structures, and/or preventing aberrant DNA rearrangement at arrested replication forks. The chain is Protein mms22 (mus7) from Schizosaccharomyces pombe (strain 972 / ATCC 24843) (Fission yeast).